Here is a 206-residue protein sequence, read N- to C-terminus: Small ribosomal subunit protein uS4 (206 aa).

The disordered stretch occupies residues 18–45 (NIWGRPKSPVNRREYGPGQHGQRRKGKM). Residues 94–157 (RRLDAVVYRA…KQLASVLEAV (64 aa)) enclose the S4 RNA-binding domain.

Belongs to the universal ribosomal protein uS4 family. In terms of assembly, part of the 30S ribosomal subunit. Contacts protein S5. The interaction surface between S4 and S5 is involved in control of translational fidelity.

One of the primary rRNA binding proteins, it binds directly to 16S rRNA where it nucleates assembly of the body of the 30S subunit. Its function is as follows. With S5 and S12 plays an important role in translational accuracy. This chain is Small ribosomal subunit protein uS4, found in Ruegeria pomeroyi (strain ATCC 700808 / DSM 15171 / DSS-3) (Silicibacter pomeroyi).